Here is a 240-residue protein sequence, read N- to C-terminus: Thiopurine S-methyltransferase (240 aa).

24–35 (WKEKWVTRHISF) lines the S-adenosyl-L-methionine pocket. Position 34 is a phosphoserine (S34). F35 contributes to the substrate binding site. Position 53 is an N6-acetyllysine (K53). Residues L64, E85, 129-130 (SI), and R147 contribute to the S-adenosyl-L-methionine site.

It belongs to the class I-like SAM-binding methyltransferase superfamily. TPMT family. In terms of assembly, monomer.

Its subcellular location is the cytoplasm. The enzyme catalyses S-adenosyl-L-methionine + a thiopurine = S-adenosyl-L-homocysteine + a thiopurine S-methylether.. It carries out the reaction mercaptopurine + S-adenosyl-L-methionine = 6-methylthiopurine + S-adenosyl-L-homocysteine + H(+). In terms of biological role, catalyzes the S-methylation of thiopurine drugs such as 6-mercaptopurine (also called mercaptopurine, 6-MP or its brand name Purinethol) using S-adenosyl-L-methionine as the methyl donor. TPMT activity modulates the cytotoxic effects of thiopurine prodrugs. A natural substrate for this enzyme has yet to be identified. The chain is Thiopurine S-methyltransferase (Tpmt) from Mus musculus (Mouse).